A 391-amino-acid chain; its full sequence is Phosphoprotein (391 aa).

2 positions are modified to phosphothreonine: threonine 10 and threonine 16. Residues 54-65 are compositionally biased toward polar residues; the sequence is QKNIQHPTASHQ. Disordered regions lie at residues 54–98 and 148–184; these read QKNI…EPLF and PVTE…KERS. Residue serine 69 is modified to Phosphoserine. 3 positions are modified to phosphothreonine: threonine 91, threonine 150, and threonine 165. Phosphoserine is present on serine 188. The interval 216–279 is multimerization; it reads ISANEIMDLL…MATVKIMDPG (64 aa). Residues 218–245 are a coiled coil; it reads ANEIMDLLRGMDARLQHLEQKVDKVLAQ. Threonine 250 carries the post-translational modification Phosphothreonine. The residue at position 257 (serine 257) is a Phosphoserine. Residues threonine 258 and threonine 282 each carry the phosphothreonine modification. Residues serine 292 and serine 294 each carry the phosphoserine modification. Threonine 298 is subject to Phosphothreonine. 2 positions are modified to phosphoserine: serine 301 and serine 374. Residues 343–391 are interaction with the nucleoprotein; sequence AGRKVMITKMITDCVANPQMKQAFEQRLAKASTEDALNDIKRDIIRSAI. At threonine 375 the chain carries Phosphothreonine.

The protein belongs to the rubulavirus/avulavirus P protein family. As to quaternary structure, homotetramer. Interacts (via multimerization domain) with polymerase L; this interaction forms the polymerase L-P complex. Interacts (via N-terminus) with N0 (via Ncore); this interaction allows P to chaperon N0 to avoid N polymerization before encapsidation. Interacts (via C-terminus) with N-RNA template; this interaction positions the polymerase on the template for both transcription and replication. Interacts with host RPS6KB1 kinase; this interaction may play a role in the viral replication and transcription.

Its function is as follows. Essential cofactor of the RNA polymerase L that plays a central role in the transcription and replication by forming the polymerase complex with RNA polymerase L and recruiting L to the genomic N-RNA template for RNA synthesis. Also plays a central role in the encapsidation of nascent RNA chains by forming the encapsidation complex with the nucleocapsid protein N (N-P complex). Acts as a chaperone for newly synthesized free N protein, so-called N0, allowing encapsidation of nascent RNA chains during replication. The nucleoprotein protein N prevents excessive phosphorylation of P, which leads to down-regulation of viral transcription/ replication. Participates, together with N, in the formation of viral factories (viroplasms), which are large inclusions in the host cytoplasm where replication takes place. In Mumps virus (strain Enders) (MuV), this protein is Phosphoprotein.